Reading from the N-terminus, the 675-residue chain is Putative L-type lectin-domain containing receptor kinase I.11 (675 aa).

Positions 1-22 are cleaved as a signal peptide; that stretch reads MASERLHLILLVFFNHLTFLLS. The Extracellular portion of the chain corresponds to 23–292; it reads QQEEAGFIYN…PKAKQEQTSP (270 aa). The legume-lectin like stretch occupies residues 27 to 263; that stretch reads AGFIYNGFGQ…YQYILGWSFS (237 aa). N60, N129, N186, N209, and N230 each carry an N-linked (GlcNAc...) asparagine glycan. A helical membrane pass occupies residues 293-313; it reads LLIVLLMLLVLIMLAVLGGIY. Over 314–675 the chain is Cytoplasmic; that stretch reads LYRRKKYAEV…THTITYGDGR (362 aa). The region spanning 348–620 is the Protein kinase domain; sequence FDKDGRLGKG…QVIQYINQNL (273 aa). ATP is bound by residues 354 to 362 and K376; that span reads LGKGGFGEV. D472 acts as the Proton acceptor in catalysis.

It in the C-terminal section; belongs to the protein kinase superfamily. Ser/Thr protein kinase family. This sequence in the N-terminal section; belongs to the leguminous lectin family.

It is found in the cell membrane. It catalyses the reaction L-seryl-[protein] + ATP = O-phospho-L-seryl-[protein] + ADP + H(+). It carries out the reaction L-threonyl-[protein] + ATP = O-phospho-L-threonyl-[protein] + ADP + H(+). The chain is Putative L-type lectin-domain containing receptor kinase I.11 (LECRK111) from Arabidopsis thaliana (Mouse-ear cress).